A 503-amino-acid chain; its full sequence is SH2 domain-containing adapter protein B (503 aa).

2 disordered regions span residues 1 to 49 (MAKW…QACS) and 61 to 81 (CFSA…DLIR). At Ser-101 the chain carries Phosphoserine. Residues 147-157 (AAASSSSSSGS) show a composition bias toward low complexity. Positions 147–180 (AAASSSSSSGSPHLYRSSSERRPTTPAEVRYISP) are disordered. A Glycyl lysine isopeptide (Lys-Gly) (interchain with G-Cter in SUMO2) cross-link involves residue Lys-186. Disordered stretches follow at residues 225 to 262 (ETGA…SAGY), 292 to 333 (DTPY…YDQP), and 345 to 381 (AAQF…IKHG). Basic and acidic residues predominate over residues 244 to 256 (FDAKSDLKSKAGK). A phosphoserine mark is found at Ser-301 and Ser-311. A compositionally biased stretch (polar residues) spans 301–311 (SVDSDSESTVS). Residues 313 to 328 (RLRESKLPQDDDRPAD) are compositionally biased toward basic and acidic residues. Position 382 is a phosphoserine (Ser-382). Residues 404–498 (WYHGAISRSD…AEHLSLLYPV (95 aa)) form the SH2 domain.

As to quaternary structure, interacts with phosphorylated 'Tyr-720' of the ligand-activated receptor PDGFRA via its SH2 domain. Interacts with the ligand-activated receptors PDGFRB, FGFR1, KDR/VEGFR2, IL2RB and IL2RG. Interacts with EPS8 and V-SRC. Interacts with GRB2 and GRAP. Interacts with CD3Z. Interacts with tyrosine-phosphorylated LAT upon T-cell antigen receptor activation. Interacts with PLCG1. Interacts with ZAP70, LCP2/SLP-76, VAV1 and GRAP2. Interacts with JAK1 and JAK3. Interacts with PTK2/FAK1. Interacts with CRK/CrKII. Interacts with IRS2. Interacts with PTPN11. Phosphorylated upon PDGFRA, PDGFRB, TCR, IL2 receptor, FGFR1 or VEGFR2 activation. As to expression, expressed in heart, liver, brain and kidney (at protein level).

The protein resides in the cytoplasm. The protein localises to the cell membrane. In terms of biological role, adapter protein which regulates several signal transduction cascades by linking activated receptors to downstream signaling components. May play a role in angiogenesis by regulating FGFR1, VEGFR2 and PDGFR signaling. May also play a role in T-cell antigen receptor/TCR signaling, interleukin-2 signaling, apoptosis and neuronal cells differentiation by mediating basic-FGF and NGF-induced signaling cascades. May also regulate IRS1 and IRS2 signaling in insulin-producing cells. This Mus musculus (Mouse) protein is SH2 domain-containing adapter protein B (Shb).